A 183-amino-acid polypeptide reads, in one-letter code: MREYKVVVLGSGGVGKSALTVQFVTGTFIEKYDPTIEDFYRKEIEVDSSPSVLEILDTAGTEQFASMRDLYIKNGQGFILVYSLVNQQSFQDIKPMRDQIIRVKRYEKVPVILVGNKVDLESEREVSSSEGRALAEEWGCPFMETSAKSKTMVDELFAEIVRQMNYAAQPDKDDPCCSACNIQ.

Residue 10 to 17 (GSGGVGKS) coordinates GTP. The short motif at 32-40 (YDPTIEDFY) is the Effector region element. Thr-35 carries a (Microbial infection) O-linked (Glc) threonine; by C.difficile toxin TcdA, and by P.sordellii toxin TcsL glycan. Residues 57–61 (DTAGT) and 116–119 (NKVD) contribute to the GTP site. Residues Cys-176 and Cys-177 are each lipidated (S-palmitoyl cysteine). Cysteine methyl ester is present on Cys-180. The S-farnesyl cysteine moiety is linked to residue Cys-180. Residues 181 to 183 (NIQ) constitute a propeptide, removed in mature form.

The protein belongs to the small GTPase superfamily. Ras family. Interacts (GTP-bound form) with RUNDC3A. Interacts with RGS14; the interaction is GTP-dependent. Interacts with PLCE1. Interacts with ARHGAP29, SGSM1, SGSM2 and SGSM3. Interacts (GTP-bound form preferentially) with TNIK (via the CNH domain); the interaction is direct and recruits RAP2A to the E3 ubiquitin ligase NEDD4. Interacts with MINK1. Interacts (GTP-bound form preferentially) with MAP4K4. Interacts with cytoskeletal actin. In terms of processing, ubiquitinated; undergoes 'Lys-63' monoubiquitination and diubiquitination by NEDD4. Multiple lysine residues are probably modified. Ubiquitination requires TNIK, prevents interaction with effectors and inactivates RAP2A. Ubiquitination by the ECS(RAB40B) complex leads to RAP2A localization to lamellipodia plasma membrane, activation, and regulation of sorting at early endosomes for recycling to the lamellipodia plasma membrane. Post-translationally, palmitoylated. Palmitoylation is required for association with recycling endosome membranes and activation of TNIK. (Microbial infection) Glucosylated at Thr-35 by C.difficile toxin TcdA in the colonic epithelium, and by P.sordellii toxin TcsL in the vascular endothelium.

The protein resides in the midbody. It localises to the cell projection. Its subcellular location is the lamellipodium membrane. It is found in the golgi apparatus. The protein localises to the recycling endosome membrane. The protein resides in the lysosome. The enzyme catalyses GTP + H2O = GDP + phosphate + H(+). Activated by the guanine nucleotide-exchange factors RAPGEF3 and RAPGEF4 in a cAMP-dependent manner. Nucleotide exchange is also specifically stimulated by RAPGEF5, RASGEF1A and RASGEF1B. Its function is as follows. Small GTP-binding protein which cycles between a GDP-bound inactive and a GTP-bound active form. In its active form interacts with and regulates several effectors including MAP4K4, MINK1 and TNIK. Part of a signaling complex composed of NEDD4, RAP2A and TNIK which regulates neuronal dendrite extension and arborization during development. More generally, it is part of several signaling cascades and regulates cytoskeletal rearrangements, cell migration, cell adhesion and cell spreading. The chain is Ras-related protein Rap-2a from Homo sapiens (Human).